The primary structure comprises 426 residues: Serine--tRNA ligase (426 aa).

233–235 (TAE) is an L-serine binding site. 264–266 (RSE) contacts ATP. Glu-287 is a binding site for L-serine. 351–354 (EISS) serves as a coordination point for ATP. Ser-387 is a binding site for L-serine.

It belongs to the class-II aminoacyl-tRNA synthetase family. Type-1 seryl-tRNA synthetase subfamily. Homodimer. The tRNA molecule binds across the dimer.

It is found in the cytoplasm. The enzyme catalyses tRNA(Ser) + L-serine + ATP = L-seryl-tRNA(Ser) + AMP + diphosphate + H(+). It carries out the reaction tRNA(Sec) + L-serine + ATP = L-seryl-tRNA(Sec) + AMP + diphosphate + H(+). Its pathway is aminoacyl-tRNA biosynthesis; selenocysteinyl-tRNA(Sec) biosynthesis; L-seryl-tRNA(Sec) from L-serine and tRNA(Sec): step 1/1. Its function is as follows. Catalyzes the attachment of serine to tRNA(Ser). Is also able to aminoacylate tRNA(Sec) with serine, to form the misacylated tRNA L-seryl-tRNA(Sec), which will be further converted into selenocysteinyl-tRNA(Sec). The protein is Serine--tRNA ligase of Clostridium botulinum (strain Langeland / NCTC 10281 / Type F).